Consider the following 901-residue polypeptide: Protein translocase subunit SecA (901 aa).

ATP is bound by residues Q87, 105-109, and D512; that span reads GEGKT. The interval 852–901 is disordered; that stretch reads AQMQQLSHQDDDSAAAAALAAQTGDRKVGRNDPCPCGSGKKYKQCHGRLS. Zn(2+)-binding residues include C885, C887, C896, and H897. The span at 891–901 shows a compositional bias: basic residues; the sequence is KKYKQCHGRLS.

This sequence belongs to the SecA family. Monomer and homodimer. Part of the essential Sec protein translocation apparatus which comprises SecA, SecYEG and auxiliary proteins SecDF-YajC and YidC. Requires Zn(2+) as cofactor.

Its subcellular location is the cell inner membrane. It is found in the cytoplasm. The catalysed reaction is ATP + H2O + cellular proteinSide 1 = ADP + phosphate + cellular proteinSide 2.. Part of the Sec protein translocase complex. Interacts with the SecYEG preprotein conducting channel. Has a central role in coupling the hydrolysis of ATP to the transfer of proteins into and across the cell membrane, serving both as a receptor for the preprotein-SecB complex and as an ATP-driven molecular motor driving the stepwise translocation of polypeptide chains across the membrane. This is Protein translocase subunit SecA from Citrobacter koseri (strain ATCC BAA-895 / CDC 4225-83 / SGSC4696).